A 344-amino-acid polypeptide reads, in one-letter code: Dihydroorotate dehydrogenase (quinone) (344 aa).

Residues 64–68 and threonine 88 contribute to the FMN site; that span reads AGLDK. Lysine 68 contacts substrate. 113–117 is a substrate binding site; the sequence is NRMGF. FMN contacts are provided by asparagine 144 and asparagine 177. Asparagine 177 is a binding site for substrate. Catalysis depends on serine 180, which acts as the Nucleophile. Asparagine 182 serves as a coordination point for substrate. Positions 222 and 250 each coordinate FMN. Residue 251–252 participates in substrate binding; it reads NT. Residues glycine 273, glycine 302, and 323 to 324 each bind FMN; that span reads YS.

The protein belongs to the dihydroorotate dehydrogenase family. Type 2 subfamily. In terms of assembly, monomer. It depends on FMN as a cofactor.

The protein resides in the cell membrane. The enzyme catalyses (S)-dihydroorotate + a quinone = orotate + a quinol. It functions in the pathway pyrimidine metabolism; UMP biosynthesis via de novo pathway; orotate from (S)-dihydroorotate (quinone route): step 1/1. Catalyzes the conversion of dihydroorotate to orotate with quinone as electron acceptor. This chain is Dihydroorotate dehydrogenase (quinone), found in Polynucleobacter necessarius subsp. necessarius (strain STIR1).